Here is a 197-residue protein sequence, read N- to C-terminus: Adrenodoxin-like protein 2, mitochondrial (197 aa).

The N-terminal 74 residues, 1–74 (MVFHRLSRLG…TSFSTTSEKG (74 aa)), are a transit peptide targeting the mitochondrion. Positions 81–184 (INVTFVDKDG…GVRLAIPSAT (104 aa)) constitute a 2Fe-2S ferredoxin-type domain. [2Fe-2S] cluster contacts are provided by cysteine 118, cysteine 124, cysteine 127, and cysteine 165.

The protein belongs to the adrenodoxin/putidaredoxin family. [2Fe-2S] cluster serves as cofactor.

It localises to the mitochondrion. Functionally, associates with the adrenodoxin reductase MFDR to form an efficient low potential electron transfer chain that is able to reduce cytochrome C. The sequence is that of Adrenodoxin-like protein 2, mitochondrial from Arabidopsis thaliana (Mouse-ear cress).